The following is a 225-amino-acid chain: Small ribosomal subunit protein eS1 (225 aa).

A compositionally biased stretch (acidic residues) spans 206–216 (PVEEPAAEEVA). Positions 206-225 (PVEEPAAEEVAEAPAAETQE) are disordered.

The protein belongs to the eukaryotic ribosomal protein eS1 family.

This is Small ribosomal subunit protein eS1 from Methanococcus maripaludis (strain C5 / ATCC BAA-1333).